The following is a 159-amino-acid chain: MPELKIKTEKVEKQLTKEPLVLKTPKEKIDNLGKFYATGKRKNAIARVWLKVGKGKIVVNKKTIAQYFPSETYVKTILQPFVLTKTIDQYDIICTVRGGGISGQKGAILHGISKALDKSAPDFHAILRKGGLLTRDSRVVERKKYGQRKARKKTQFSKR.

The protein belongs to the universal ribosomal protein uS9 family.

The protein is Small ribosomal subunit protein uS9 of Rickettsia peacockii (strain Rustic).